Consider the following 685-residue polypeptide: Sodium/glucose cotransporter 4 (685 aa).

The interval 1-20 is disordered; the sequence is MNTELVAMEPGVSRNGVRTE. At 1-32 the chain is on the extracellular side; that stretch reads MNTELVAMEPGVSRNGVRTETTTNPSLGLHTY. Residues 33 to 53 traverse the membrane as a helical segment; the sequence is DIVVVVIYFVFVLAVGIWSSI. Residues 54-71 lie on the Cytoplasmic side of the membrane; sequence RASRGTVGGYFLAGRSMT. A helical membrane pass occupies residues 72–94; sequence WWPIGASLMSSNVGSGLFIGLAG. Topologically, residues 95-110 are extracellular; that stretch reads TGAAGGLAVGGFEWNA. A helical membrane pass occupies residues 111–131; it reads TFLLLALGWIFVPVYIAAGVV. At 132 to 153 the chain is on the cytoplasmic side; it reads TMPQYLKKRFGGQRIQVYMSVL. The helical transmembrane segment at 154–174 threads the bilayer; sequence SLILYIFTKISTDIFSGALFI. Residues 175-186 are Extracellular-facing; that stretch reads QMALGWNLYLST. A helical transmembrane segment spans residues 187 to 207; sequence VILLVVTAVYTIAGGLTAVIY. Topologically, residues 208 to 213 are cytoplasmic; it reads TDALQT. Residues 214–234 traverse the membrane as a helical segment; sequence VIMVGGALVLMFLGFQEVGWY. Over 235-271 the chain is Extracellular; it reads PGLQQLYRQAIPNTTVPNTTCHLPRPDAFHMLRDPVN. N247 carries an N-linked (GlcNAc...) asparagine glycan. The chain crosses the membrane as a helical span at residues 272 to 292; it reads GDIPWPGLIFGLTVLATWCWC. The Cytoplasmic portion of the chain corresponds to 293 to 313; the sequence is TDQVIVQRSLAAKNLSHAKGG. Residues 314 to 334 traverse the membrane as a helical segment; the sequence is SVLGGYLKILPMFFIVMPGMI. Residues 335–379 lie on the Extracellular side of the membrane; the sequence is SRALYPDEVACVDPDICQRVCGARVGCSNIAYPKLVMALMPVGLR. The helical transmembrane segment at 380–402 threads the bilayer; the sequence is GLMIAVIMAALMSSLTSIFNSSS. Topologically, residues 403–423 are cytoplasmic; it reads TLFAIDVWQRFRRQASEQELM. A helical transmembrane segment spans residues 424-444; the sequence is VVGRLFVVFLVVISILWIPII. Residues 445–455 are Extracellular-facing; it reads QSSNSGQLFDY. The chain crosses the membrane as a helical span at residues 456–476; the sequence is IQSITSYLAPPITALFLLAIF. Residues 477–483 are Cytoplasmic-facing; that stretch reads CKRVNEP. A helical membrane pass occupies residues 484–504; sequence GAFWGLMFGLVVGILRMILEF. Residues 505 to 526 are Extracellular-facing; sequence SYSAPACGEMDRRPAVLKDFHY. A helical membrane pass occupies residues 527-547; it reads LYFALLLCGLTAIIIVVISFF. Over 548–664 the chain is Cytoplasmic; sequence TEPIPDDKLA…SIEEEPLWRR (117 aa). The segment at 577-616 is disordered; that stretch reads VSVNNTEDDNSPGLAGRPVVEGPAGDEEEANTTQGPEQPG. The helical transmembrane segment at 665–685 threads the bilayer; sequence VCNINAIILLAINIFLWGYFA.

It belongs to the sodium:solute symporter (SSF) (TC 2.A.21) family.

The protein resides in the cell membrane. The catalysed reaction is D-mannose(out) + n Na(+)(out) = D-mannose(in) + n Na(+)(in). Its function is as follows. Electrogenic Na(+)-coupled sugar symporter that may play a primary role in D-mannose and possibly D-fructose and D-glucose transport at the plasma membrane. Transporter activity is driven by a transmembrane Na(+) electrochemical gradient set by the Na(+)/K(+) pump. Exclusively recognizes sugar substrates having a pyranose ring with an axial hydroxyl group on carbon 2. This is Sodium/glucose cotransporter 4 (Slc5a9) from Mus musculus (Mouse).